A 1517-amino-acid polypeptide reads, in one-letter code: Neurite extension and migration factor (1517 aa).

Residues 381-405 show a composition bias toward basic and acidic residues; it reads DKKKGKEEVHEDKSIEKKDEKDNGE. 7 disordered regions span residues 381–416, 505–529, 644–697, 732–775, 1065–1084, 1161–1228, and 1372–1422; these read DKKK…PCSG, VNER…PKKR, SMEA…GLIG, KKIK…HMSE, RHSS…SPQS, DEPA…KKGK, and AGTP…SSED. Over residues 644–663 the composition is skewed to polar residues; it reads SMEASASSKQVSFGSDQKQA. The span at 678-687 shows a compositional bias: low complexity; the sequence is SALLAAPSSA. The segment covering 764 to 773 has biased composition (polar residues); the sequence is TPGTSNSSHM.

The protein localises to the nucleus. Its subcellular location is the cytoplasm. In terms of biological role, involved in neurite outgrowth by regulating cell-cell adhesion via the N-cadherin signaling pathway. May act by regulating expression of protein-coding genes, such as N-cadherins and integrin beta-1 (ITGB1). The polypeptide is Neurite extension and migration factor (Rattus norvegicus (Rat)).